Here is a 226-residue protein sequence, read N- to C-terminus: PKHD-type hydroxylase Nwi_0701 (226 aa).

The Fe2OG dioxygenase domain occupies 78–178 (KVLPPRFNRY…RLAAFFWTQS (101 aa)). The Fe cation site is built by His-96, Asp-98, and His-159. Arg-169 contributes to the 2-oxoglutarate binding site.

Fe(2+) is required as a cofactor. The cofactor is L-ascorbate.

The protein is PKHD-type hydroxylase Nwi_0701 of Nitrobacter winogradskyi (strain ATCC 25391 / DSM 10237 / CIP 104748 / NCIMB 11846 / Nb-255).